A 295-amino-acid chain; its full sequence is 4-hydroxy-tetrahydrodipicolinate synthase (295 aa).

Thr-46 lines the pyruvate pocket. The Proton donor/acceptor role is filled by Tyr-135. Lys-164 (schiff-base intermediate with substrate) is an active-site residue. Ile-205 is a pyruvate binding site.

This sequence belongs to the DapA family. As to quaternary structure, homotetramer; dimer of dimers.

The protein localises to the cytoplasm. The catalysed reaction is L-aspartate 4-semialdehyde + pyruvate = (2S,4S)-4-hydroxy-2,3,4,5-tetrahydrodipicolinate + H2O + H(+). It participates in amino-acid biosynthesis; L-lysine biosynthesis via DAP pathway; (S)-tetrahydrodipicolinate from L-aspartate: step 3/4. Its function is as follows. Catalyzes the condensation of (S)-aspartate-beta-semialdehyde [(S)-ASA] and pyruvate to 4-hydroxy-tetrahydrodipicolinate (HTPA). The sequence is that of 4-hydroxy-tetrahydrodipicolinate synthase from Aliarcobacter butzleri (strain RM4018) (Arcobacter butzleri).